The sequence spans 440 residues: Adenylosuccinate synthetase 1, chloroplastic (440 aa).

GTP contacts are provided by residues 13-19 and 41-43; these read GDEGKGK and GHT. The active-site Proton acceptor is aspartate 14. Mg(2+) is bound by residues aspartate 14 and glycine 41. Residues 14–17, 39–42, threonine 135, arginine 149, glutamine 230, threonine 245, and arginine 313 each bind IMP; these read DEGK and NAGH. The active-site Proton donor is histidine 42. Substrate is bound at residue 309–315; sequence TVTRRKR. Residues arginine 315 and 341 to 343 each bind GTP; that span reads KLD.

Belongs to the adenylosuccinate synthetase family. Homodimer. Mg(2+) serves as cofactor.

The protein localises to the plastid. The protein resides in the chloroplast. It carries out the reaction IMP + L-aspartate + GTP = N(6)-(1,2-dicarboxyethyl)-AMP + GDP + phosphate + 2 H(+). It participates in purine metabolism; AMP biosynthesis via de novo pathway; AMP from IMP: step 1/2. Plays an important role in the de novo pathway and in the salvage pathway of purine nucleotide biosynthesis. Catalyzes the first committed step in the biosynthesis of AMP from IMP. This chain is Adenylosuccinate synthetase 1, chloroplastic, found in Ricinus communis (Castor bean).